The primary structure comprises 56 residues: Large ribosomal subunit protein bL32 (56 aa).

It belongs to the bacterial ribosomal protein bL32 family.

This chain is Large ribosomal subunit protein bL32, found in Brevibacillus brevis (strain 47 / JCM 6285 / NBRC 100599).